A 296-amino-acid chain; its full sequence is Glycine N-acyltransferase (296 aa).

Lys-16, Lys-127, and Lys-141 each carry N6-acetyllysine; alternate. N6-succinyllysine; alternate is present on residues Lys-16, Lys-127, and Lys-141. An N6-acetyllysine modification is found at Lys-159. Lys-169 carries the N6-succinyllysine modification. 2 positions are modified to N6-acetyllysine; alternate: Lys-183 and Lys-256. Lys-183 and Lys-256 each carry N6-succinyllysine; alternate.

The protein belongs to the glycine N-acyltransferase family.

It is found in the mitochondrion. It carries out the reaction an acyl-CoA + glycine = an N-acylglycine + CoA + H(+). The enzyme catalyses benzoyl-CoA + glycine = N-benzoylglycine + CoA + H(+). Functionally, mitochondrial acyltransferase which transfers an acyl group to the N-terminus of glycine and glutamine, although much less efficiently. Can conjugate a multitude of substrates to form a variety of N-acylglycines, thereby detoxify xenobiotics, such as benzoic acid or salicylic acid, and endogenous organic acids, such as isovaleric acid. This chain is Glycine N-acyltransferase (GLYAT), found in Pongo abelii (Sumatran orangutan).